A 1254-amino-acid chain; its full sequence is Structural polyprotein (1254 aa).

The tract at residues L43 to K77 is host transcription inhibition. The segment at T60–E112 is disordered. Residues Q70–P108 carry the Nuclear localization signal motif. The segment covering K84 to R110 has biased composition (basic residues). The binding to the viral RNA stretch occupies residues Q95–I123. The ribosome-binding stretch occupies residues P108–C122. C122 and C137 are disulfide-bonded. A Peptidase S3 domain is found at C122–W270. The active-site Charge relay system is H148. The short motif at I153 to Y163 is the Nuclear export signal element. The segment at K164–Y169 is interaction with spike glycoprotein E2. D170 functions as the Charge relay system in the catalytic mechanism. The segment at P192–A202 is dimerization of the capsid protein. S222 (charge relay system) is an active-site residue. The interval D228–R232 is dimerization of the capsid protein. Residues W270–G694 lie on the Extracellular side of the membrane. Positions S271 to T282 are functions as an uncleaved signal peptide for the precursor of protein E3/E2. Disulfide bonds link C277-C286, C291-C295, and C294-C326. An N-linked (GlcNAc...) asparagine; by host glycan is attached at N281. N328 carries an N-linked (GlcNAc...) asparagine; by host glycan. 6 disulfides stabilise this stretch: C353–C459, C356–C362, C425–C439, C487–C599, C535–C559, and C537–C554. Interaction with host Mxra8 receptor stretches follow at residues Y360 to Y363 and H396 to H398. Residues T518–N521 are interaction with host Mxra8 receptor. N534 is a glycosylation site (N-linked (GlcNAc...) asparagine; by host). Residues T550–I556 are interaction with host Mxra8 receptor. N596 is a glycosylation site (N-linked (GlcNAc...) asparagine; by host). Residues L695 to L715 traverse the membrane as a helical segment. Over A716–A756 the chain is Cytoplasmic. The S-palmitoyl cysteine; by host moiety is linked to residue C719. The interval T724–K728 is interaction with the capsid protein. 2 S-palmitoyl cysteine; by host lipidation sites follow: C729 and C750. The tract at residues C729 to X749 is transient transmembrane before p62-6K protein processing. C729 and C750 are joined by a disulfide. Residues A757 to K771 are Extracellular-facing. A helical membrane pass occupies residues T772 to I792. A topological domain (cytoplasmic) is located at residue K793. The helical transmembrane segment at S794–A814 threads the bilayer. Over K815–S1231 the chain is Extracellular. Intrachain disulfides connect C865-C930, C878-C910, C879-C912, and C884-C894. Residues V900–T917 form an E1 fusion peptide loop region. N957 carries N-linked (GlcNAc...) asparagine; by host glycosylation. Disulfide bonds link C1075-C1087, C1117-C1192, C1122-C1196, and C1144-C1186. A helical transmembrane segment spans residues G1232–M1252. The S-palmitoyl cysteine; by host moiety is linked to residue C1249. C1249 carries the S-stearoyl cysteine; by host lipid modification. The Cytoplasmic portion of the chain corresponds to R1253–R1254.

In terms of assembly, homodimer. Homomultimer. Interacts with host karyopherin KPNA4; this interaction allows the nuclear import of the viral capsid protein. Interacts with spike glycoprotein E2. Interacts with host IRAK1; the interaction leads to inhibition of IRAK1-dependent signaling. As to quaternary structure, the precursor of protein E3/E2 and E1 form a heterodimer shortly after synthesis. The precursor of protein E3/E2 and E1 form a heterodimer shortly after synthesis. Processing of the precursor of protein E3/E2 into E2 and E3 results in a heterodimer of the spike glycoproteins E2 and E1. Spike at virion surface are constituted of a trimer of E2-E1 heterodimers. After target cell attachment and endocytosis, E1 change conformation to form homotrimers. Interacts with 6K protein. In terms of assembly, interacts with spike glycoprotein E1. Processing of the precursor of protein E3/E2 into E2 and E3 results in a heterodimer of the spike glycoproteins E2 and E1. Spike at virion surface are constituted of a trimer of E2-E1 heterodimers. Interacts with 6K protein. Interacts with host MXRA8; this interaction mediates virus entry. Structural polyprotein: Specific enzymatic cleavages in vivo yield mature proteins. Capsid protein is auto-cleaved during polyprotein translation, unmasking a signal peptide at the N-terminus of the precursor of E3/E2. The remaining polyprotein is then targeted to the host endoplasmic reticulum, where host signal peptidase cleaves it into pE2, 6K and E1 proteins. pE2 is further processed to mature E3 and E2 by host furin in trans-Golgi vesicle. Post-translationally, palmitoylated via thioester bonds. These palmitoylations may induce disruption of the C-terminus transmembrane. This would result in the reorientation of E2 C-terminus from lumenal to cytoplasmic side. In terms of processing, N-glycosylated. Palmitoylated via thioester bonds.

The protein resides in the virion. It is found in the host cytoplasm. It localises to the host cell membrane. Its subcellular location is the host nucleus. The protein localises to the virion membrane. The protein resides in the host Golgi apparatus. It is found in the host trans-Golgi network. It localises to the host endoplasmic reticulum. The enzyme catalyses Autocatalytic release of the core protein from the N-terminus of the togavirus structural polyprotein by hydrolysis of a -Trp-|-Ser- bond.. Forms an icosahedral capsid with a T=4 symmetry composed of 240 copies of the capsid protein surrounded by a lipid membrane through which penetrate 80 spikes composed of trimers of E1-E2 heterodimers. The capsid protein binds to the viral RNA genome at a site adjacent to a ribosome binding site for viral genome translation following genome release. Possesses a protease activity that results in its autocatalytic cleavage from the nascent structural protein. Following its self-cleavage, the capsid protein transiently associates with ribosomes, and within several minutes the protein binds to viral RNA and rapidly assembles into icosahedric core particles. The resulting nucleocapsid eventually associates with the cytoplasmic domain of the spike glycoprotein E2 at the cell membrane, leading to budding and formation of mature virions. In case of infection, new virions attach to target cells and after clathrin-mediated endocytosis their membrane fuses with the host endosomal membrane. This leads to the release of the nucleocapsid into the cytoplasm, followed by an uncoating event necessary for the genomic RNA to become accessible. The uncoating might be triggered by the interaction of capsid proteins with ribosomes. Binding of ribosomes would release the genomic RNA since the same region is genomic RNA-binding and ribosome-binding. Specifically inhibits interleukin-1 receptor-associated kinase 1/IRAK1-dependent signaling during viral entry, representing a means by which the alphaviruses may evade innate immune detection and activation prior to viral gene expression. Its function is as follows. Provides the signal sequence for the translocation of the precursor of protein E3/E2 to the host endoplasmic reticulum. Furin-cleaved E3 remains associated with spike glycoprotein E1 and mediates pH protection of the latter during the transport via the secretory pathway. After virion release from the host cell, the assembly protein E3 is gradually released in the extracellular space. Functionally, plays a role in viral attachment to target host cell, by binding to the cell receptor MXRA8. The host LDLR may also act as a cell receptor for viral entry. Synthesized as a p62 precursor which is processed by furin at the cell membrane just before virion budding, giving rise to E2-E1 heterodimer. The p62-E1 heterodimer is stable, whereas E2-E1 is unstable and dissociate at low pH. p62 is processed at the last step, presumably to avoid E1 fusion activation before its final export to cell surface. E2 C-terminus contains a transitory transmembrane that would be disrupted by palmitoylation, resulting in reorientation of the C-terminal tail from lumenal to cytoplasmic side. This step is critical since E2 C-terminus is involved in budding by interacting with capsid proteins. This release of E2 C-terminus in cytoplasm occurs lately in protein export, and precludes premature assembly of particles at the endoplasmic reticulum membrane. In terms of biological role, acts as a viroporin that participates in virus glycoprotein processing and transport to the plasma membrane, cell permeabilization and budding of viral particles. The cation channel is permeable to Na(+)&gt;K(+)&gt;Ca(2+) in vitro. Disrupts the calcium homeostasis of the cell, probably at the endoplasmic reticulum level. This leads to cytoplasmic calcium elevation. Because of its lipophilic properties, the 6K protein is postulated to influence the selection of lipids that interact with the transmembrane domains of the glycoproteins, which, in turn, affects the deformability of the bilayer required for the extreme curvature that occurs as budding proceeds. Present in low amount in virions, about 3% compared to viral glycoproteins. Class II viral fusion protein. Fusion activity is inactive as long as E1 is bound to E2 in mature virion. After virus attachment to target cell via host MXRA8 and endocytosis, acidification of the endosome induce dissociation of E1/E2 heterodimer and concomitant trimerization of the E1 subunits. This E1 trimer is fusion active, and promotes release of viral nucleocapsid in cytoplasm after endosome and viral membrane fusion. Efficient fusion requires the presence of cholesterol and sphingolipid in the target membrane. In Ross river virus (strain NB5092) (RRV), this protein is Structural polyprotein.